We begin with the raw amino-acid sequence, 201 residues long: Recombination protein RecR (201 aa).

The C4-type zinc-finger motif lies at Cys57–Cys72. The region spanning Gly81–Pro176 is the Toprim domain.

Belongs to the RecR family.

In terms of biological role, may play a role in DNA repair. It seems to be involved in an RecBC-independent recombinational process of DNA repair. It may act with RecF and RecO. This chain is Recombination protein RecR, found in Idiomarina loihiensis (strain ATCC BAA-735 / DSM 15497 / L2-TR).